Here is a 304-residue protein sequence, read N- to C-terminus: Recombination-associated protein RdgC (304 aa).

This sequence belongs to the RdgC family.

The protein resides in the cytoplasm. It is found in the nucleoid. Functionally, may be involved in recombination. The protein is Recombination-associated protein RdgC of Shewanella sp. (strain W3-18-1).